The sequence spans 345 residues: Dihydroorotate dehydrogenase (quinone) (345 aa).

Residues alanine 65 to lysine 69 and threonine 89 contribute to the FMN site. Lysine 69 is a substrate binding site. Substrate is bound at residue asparagine 114–phenylalanine 118. Residues asparagine 146 and asparagine 179 each contribute to the FMN site. Residue asparagine 179 participates in substrate binding. Residue serine 182 is the Nucleophile of the active site. Asparagine 184 is a substrate binding site. Residues lysine 224 and threonine 252 each coordinate FMN. Asparagine 253 to threonine 254 is a binding site for substrate. FMN-binding positions include glycine 275, glycine 304, and tyrosine 325–threonine 326.

This sequence belongs to the dihydroorotate dehydrogenase family. Type 2 subfamily. As to quaternary structure, monomer. It depends on FMN as a cofactor.

Its subcellular location is the cell membrane. The enzyme catalyses (S)-dihydroorotate + a quinone = orotate + a quinol. It functions in the pathway pyrimidine metabolism; UMP biosynthesis via de novo pathway; orotate from (S)-dihydroorotate (quinone route): step 1/1. Functionally, catalyzes the conversion of dihydroorotate to orotate with quinone as electron acceptor. This is Dihydroorotate dehydrogenase (quinone) from Janthinobacterium sp. (strain Marseille) (Minibacterium massiliensis).